The primary structure comprises 291 residues: MAGSLSEIKAKIISTEKTSKITSAMRMVSSAKLVKSEQAARDFQIYASKIRQITTDLLKSELTIGSDNPMLVSRPVKKTGYIVITSDKGLVGGYNSKILKSVMDMITEYHADGDYEIISIGSVGSDFFKARGMNVAFELRGLADQPSFEQVRQIISQSVDMFVNEIFDELYVCYNHHVNSLTSQVRVQQMLPISDLVADEAAEEGVTGFELEPNRHDILDQLLPQFTESLIYGAIIDAKTAEHAAGMTAMQTATDNAKNVINDLTIQYNRARQAAITQEITEIVAGANALE.

It belongs to the ATPase gamma chain family. As to quaternary structure, F-type ATPases have 2 components, CF(1) - the catalytic core - and CF(0) - the membrane proton channel. CF(1) has five subunits: alpha(3), beta(3), gamma(1), delta(1), epsilon(1). CF(0) has three main subunits: a, b and c.

It localises to the cell membrane. Its function is as follows. Produces ATP from ADP in the presence of a proton gradient across the membrane. The gamma chain is believed to be important in regulating ATPase activity and the flow of protons through the CF(0) complex. This Streptococcus pyogenes serotype M1 protein is ATP synthase gamma chain.